Here is a 132-residue protein sequence, read N- to C-terminus: MVMTDPIADFLTRIRNANQANHEVLEVPASNIKKGIAEILKREGFVKNVEIIEDDKQGIIRVFLKYGQNGEKVITGLKRISKPGLRVYKKREDLPKVLNGLGIAILSTSEGLLTDKEARQKNVGGEVIAYVW.

It belongs to the universal ribosomal protein uS8 family. Part of the 30S ribosomal subunit. Contacts proteins S5 and S12.

Its function is as follows. One of the primary rRNA binding proteins, it binds directly to 16S rRNA central domain where it helps coordinate assembly of the platform of the 30S subunit. The chain is Small ribosomal subunit protein uS8 from Streptococcus sanguinis (strain SK36).